The following is a 95-amino-acid chain: uncharacterized protein (95 aa).

Residues 12–32 (IASLVVSVVVLLIGLILWFFI) traverse the membrane as a helical segment.

Its subcellular location is the cell membrane. This is an uncharacterized protein from Escherichia coli O6:H1 (strain CFT073 / ATCC 700928 / UPEC).